The sequence spans 459 residues: Cysteine--tRNA ligase (459 aa).

Cys-29 is a binding site for Zn(2+). Positions 31 to 41 match the 'HIGH' region motif; the sequence is MTVYDLCHLGH. The Zn(2+) site is built by Cys-213, His-238, and Glu-242. The short motif at 270 to 274 is the 'KMSKS' region element; that stretch reads KMSKS. Position 273 (Lys-273) interacts with ATP.

The protein belongs to the class-I aminoacyl-tRNA synthetase family. In terms of assembly, monomer. Requires Zn(2+) as cofactor.

The protein localises to the cytoplasm. The catalysed reaction is tRNA(Cys) + L-cysteine + ATP = L-cysteinyl-tRNA(Cys) + AMP + diphosphate. This is Cysteine--tRNA ligase from Variovorax paradoxus (strain S110).